The primary structure comprises 87 residues: Cell division topological specificity factor (87 aa).

It belongs to the MinE family.

Functionally, prevents the cell division inhibition by proteins MinC and MinD at internal division sites while permitting inhibition at polar sites. This ensures cell division at the proper site by restricting the formation of a division septum at the midpoint of the long axis of the cell. This chain is Cell division topological specificity factor, found in Clostridium botulinum (strain ATCC 19397 / Type A).